Consider the following 893-residue polypeptide: Translation initiation factor IF-2 (893 aa).

Disordered stretches follow at residues 51–203 and 216–299; these read KEHG…AEAE and EENE…TSMQ. Composition is skewed to basic and acidic residues over residues 102–203, 216–238, and 245–261; these read ALEE…AEAE, EENE…DADY, and HARE…EQQP. The tr-type G domain occupies 392–561; that stretch reads GRAPVVTIMG…LLQSEVLELT (170 aa). The segment at 401–408 is G1; sequence GHVDHGKT. Position 401–408 (401–408) interacts with GTP; that stretch reads GHVDHGKT. The G2 stretch occupies residues 426-430; that stretch reads GITQH. Residues 447-450 are G3; the sequence is DTPG. GTP contacts are provided by residues 447 to 451 and 501 to 504; these read DTPGH and NKID. The interval 501-504 is G4; the sequence is NKID. The tract at residues 537–539 is G5; the sequence is SAK.

The protein belongs to the TRAFAC class translation factor GTPase superfamily. Classic translation factor GTPase family. IF-2 subfamily.

It localises to the cytoplasm. One of the essential components for the initiation of protein synthesis. Protects formylmethionyl-tRNA from spontaneous hydrolysis and promotes its binding to the 30S ribosomal subunits. Also involved in the hydrolysis of GTP during the formation of the 70S ribosomal complex. The protein is Translation initiation factor IF-2 of Aliivibrio fischeri (strain ATCC 700601 / ES114) (Vibrio fischeri).